Here is a 544-residue protein sequence, read N- to C-terminus: Chaperonin GroEL (544 aa).

Residues 30–33 (TLGP), K51, 87–91 (DGTTT), G415, 481–483 (DAL), and D497 each bind ATP.

It belongs to the chaperonin (HSP60) family. As to quaternary structure, forms a cylinder of 14 subunits composed of two heptameric rings stacked back-to-back. Interacts with the co-chaperonin GroES.

It localises to the cytoplasm. It catalyses the reaction ATP + H2O + a folded polypeptide = ADP + phosphate + an unfolded polypeptide.. Together with its co-chaperonin GroES, plays an essential role in assisting protein folding. The GroEL-GroES system forms a nano-cage that allows encapsulation of the non-native substrate proteins and provides a physical environment optimized to promote and accelerate protein folding. This is Chaperonin GroEL from Chlamydia trachomatis serovar L2 (strain ATCC VR-902B / DSM 19102 / 434/Bu).